The primary structure comprises 356 residues: Tyrosinase P (356 aa).

An N-terminal signal peptide occupies residues 1 to 19 (MGFYRNLVLVAASCTQALG). N-linked (GlcNAc...) asparagine glycosylation is present at Asn-81. The Cu cation site is built by His-87 and His-96. Residues Asn-148 and Asn-193 are each glycosylated (N-linked (GlcNAc...) asparagine). His-203 provides a ligand contact to Cu cation. Residue Asn-226 is glycosylated (N-linked (GlcNAc...) asparagine). Cu cation contacts are provided by His-263 and His-286. An N-linked (GlcNAc...) asparagine glycan is attached at Asn-309.

The protein belongs to the tyrosinase family. Cu(2+) is required as a cofactor. In terms of processing, glycosylated.

Its subcellular location is the endoplasmic reticulum lumen. The protein localises to the golgi apparatus lumen. It catalyses the reaction aspulvinone E + O2 = (5Z)-3-(3,4-dihydroxyphenyl)-5-[(3,4-dihydroxyphenyl)methylidene]-5-oxo-2,5-dihydrofuran-3-olate. It carries out the reaction aspulvinone E + O2 = (2Z)-2-[(3,4-dioxocyclohexa-1,5-dien-1-yl)methylidene]-4-(4-hydroxyphenyl)-5-oxo-2,5-dihydrofuran-3-olate + H2O. With respect to regulation, activity is inhibited by the presence of dithiothreitol (DTT). Functionally, tyrosinase; part of the gene cluster that mediates the biosynthesis of Asp-melanin, a pigment that confers resistance against UV light and hampers phagocytosis by soil amoeba. The nonribosomal peptide synthase melA converts 4-hydroxyphenylpyruvate (4-HPPA) to aspulvinone E. The tyrosinase tyrP then performs hydroxylations of both aromatic moieties of aspulvinone E. The product of tyrP is highly unstable, and, due to the high reactivity of methides and ortho-diquinones, the polymeric Asp-melanin forms spontaneously. The protein is Tyrosinase P (tyrP) of Aspergillus terreus.